The following is a 253-amino-acid chain: Short chain dehydrogenase ple7 (253 aa).

The chain crosses the membrane as a helical span at residues 5–25 (IVIVTGASHGIGLATVNLLLA). The NADP(+) site is built by Val-8, Arg-116, Tyr-148, Lys-152, and Asn-184. Tyr-148 (proton acceptor) is an active-site residue. Residue Lys-152 is the Lowers pKa of active site Tyr of the active site. Asn-187 is a glycosylation site (N-linked (GlcNAc...) asparagine).

This sequence belongs to the short-chain dehydrogenases/reductases (SDR) family.

It is found in the membrane. Its pathway is secondary metabolite biosynthesis; terpenoid biosynthesis. Functionally, short chain dehydrogenase; part of the gene cluster that mediates the biosynthesis of pleuromutilin, a tricyclic diterpene showing antibacterial properties. The geranylgeranyl diphosphate (GGPP) synthase ple4 catalyzes the first step in pleuromutilin biosynthesis. GGPP is then substrate of the premutilin synthase (PS) ple3 to yield premutilin. Premutilin synthase is a bifunctional enzyme composed of the fusion of a class II diterpene cyclase (DTC) and a class I diterpene synthase (DTS), with the corresponding domains and active sites containing characteristic aspartate-rich motifs. GGPP is first converted to mutildienyl-diphosphate (MPP) at the class II DTC site. MPP is subsequently further cyclized at the class I DTS site, followed by a 1,5-hydride shift and addition of water prior to terminating deprotonation, to yield premutilin. The cytochrome P450 monooxygenases ple5 and ple6 hydroxylate premutilin at C-11 and C-3, respectively, producing 11-hydroxypremutilin and 3-hydroxypremutilin. The combination of the actions of both ple5 and ple6 leads to the production of 3,11-dihydroxypremutilin. The short chain dehydrogenase ple7 further converts 3,11-dihydroxypremutilin into mutilin. The acetyltransferase ple2 then acetylates mutilin to produce 14-O-acetylmutilin. Finally, the cytochrome P450 monooxygenase ple1 catalyzes hydroxylation on the alpha position of the acetyl side chain of 14-O-acetylmutilin to yield pleuromutilin. In Rhodocybe pseudopiperita (Clitopilus pseudopiperitus), this protein is Short chain dehydrogenase ple7.